A 132-amino-acid chain; its full sequence is MSLSDPIADMLTRIRNAQQAKHELCVIPGSKIKKSILDLLKEEGFVDDVQTVKNGSFDDFQVKLKYDTEKKPVIRMIERVSTPGRRVYIQSGEIRPFRNNIGTLILSTSKGVMTGKRARKLRVGGEVLCKVF.

It belongs to the universal ribosomal protein uS8 family. Part of the 30S ribosomal subunit. Contacts proteins S5 and S12.

Its function is as follows. One of the primary rRNA binding proteins, it binds directly to 16S rRNA central domain where it helps coordinate assembly of the platform of the 30S subunit. The chain is Small ribosomal subunit protein uS8 from Leptospira biflexa serovar Patoc (strain Patoc 1 / Ames).